The chain runs to 756 residues: 5-methyltetrahydropteroyltriglutamate--homocysteine methyltransferase (756 aa).

5-methyltetrahydropteroyltri-L-glutamate is bound by residues 16–19 and Lys-116; that span reads RELK. L-homocysteine contacts are provided by residues 435-437 and Glu-488; that span reads IGS. Residues 435 to 437 and Glu-488 each bind L-methionine; that span reads IGS. 5-methyltetrahydropteroyltri-L-glutamate-binding positions include 519 to 520 and Trp-565; that span reads RC. Position 603 (Asp-603) interacts with L-homocysteine. Asp-603 contacts L-methionine. 5-methyltetrahydropteroyltri-L-glutamate is bound at residue Glu-609. Positions 645, 647, and 669 each coordinate Zn(2+). Catalysis depends on His-698, which acts as the Proton donor. Residue Cys-730 participates in Zn(2+) binding.

The protein belongs to the vitamin-B12 independent methionine synthase family. Zn(2+) is required as a cofactor.

It catalyses the reaction 5-methyltetrahydropteroyltri-L-glutamate + L-homocysteine = tetrahydropteroyltri-L-glutamate + L-methionine. Its pathway is amino-acid biosynthesis; L-methionine biosynthesis via de novo pathway; L-methionine from L-homocysteine (MetE route): step 1/1. Catalyzes the transfer of a methyl group from 5-methyltetrahydrofolate to homocysteine resulting in methionine formation. This is 5-methyltetrahydropteroyltriglutamate--homocysteine methyltransferase from Marinobacter nauticus (strain ATCC 700491 / DSM 11845 / VT8) (Marinobacter aquaeolei).